The following is a 145-amino-acid chain: D-aminoacyl-tRNA deacylase (145 aa).

The short motif at 137–138 is the Gly-cisPro motif, important for rejection of L-amino acids element; sequence GP.

It belongs to the DTD family. In terms of assembly, homodimer.

Its subcellular location is the cytoplasm. The enzyme catalyses glycyl-tRNA(Ala) + H2O = tRNA(Ala) + glycine + H(+). It catalyses the reaction a D-aminoacyl-tRNA + H2O = a tRNA + a D-alpha-amino acid + H(+). An aminoacyl-tRNA editing enzyme that deacylates mischarged D-aminoacyl-tRNAs. Also deacylates mischarged glycyl-tRNA(Ala), protecting cells against glycine mischarging by AlaRS. Acts via tRNA-based rather than protein-based catalysis; rejects L-amino acids rather than detecting D-amino acids in the active site. By recycling D-aminoacyl-tRNA to D-amino acids and free tRNA molecules, this enzyme counteracts the toxicity associated with the formation of D-aminoacyl-tRNA entities in vivo and helps enforce protein L-homochirality. This is D-aminoacyl-tRNA deacylase from Pseudomonas aeruginosa (strain UCBPP-PA14).